The sequence spans 203 residues: Guanylate kinase (203 aa).

Positions 5 to 184 (GMLIVLSGPS…AVQRIEKIIE (180 aa)) constitute a Guanylate kinase-like domain. 12 to 19 (GPSGVGKG) serves as a coordination point for ATP.

This sequence belongs to the guanylate kinase family.

It is found in the cytoplasm. The enzyme catalyses GMP + ATP = GDP + ADP. Its function is as follows. Essential for recycling GMP and indirectly, cGMP. The protein is Guanylate kinase of Latilactobacillus sakei subsp. sakei (strain 23K) (Lactobacillus sakei subsp. sakei).